Here is a 681-residue protein sequence, read N- to C-terminus: Epithelial splicing regulatory protein 1 (681 aa).

3 consecutive RRM domains span residues 225–302 (TVVR…KATG), 326–406 (VIVR…RSTA), and 445–525 (DCIR…QCSA). Ser-543 carries the post-translational modification Phosphoserine. An Omega-N-methylarginine modification is found at Arg-582.

This sequence belongs to the ESRP family. In terms of tissue distribution, epithelial cell-specific.

The protein localises to the nucleus. Its function is as follows. mRNA splicing factor that regulates the formation of epithelial cell-specific isoforms. Specifically regulates the expression of FGFR2-IIIb, an epithelial cell-specific isoform of FGFR2. Also regulates the splicing of CD44, CTNND1, ENAH, 3 transcripts that undergo changes in splicing during the epithelial-to-mesenchymal transition (EMT). Acts by directly binding specific sequences in mRNAs. Binds the GU-rich sequence motifs in the ISE/ISS-3, a cis-element regulatory region present in the mRNA of FGFR2. Regulates splicing and expression of genes involved in inner ear development, auditory hair cell differentiation, and cell fate specification in the cochlear epithelium. In Homo sapiens (Human), this protein is Epithelial splicing regulatory protein 1 (ESRP1).